The chain runs to 185 residues: Auxin-responsive protein IAA34 (185 aa).

The short motif at 63–67 is the EAR-like (transcriptional repression) element; it reads LGLSL. Positions 92 to 180 constitute a PB1 domain; that stretch reads WGYVKVTMDG…ERLRITRRND (89 aa).

This sequence belongs to the Aux/IAA family. Homodimers and heterodimers.

Its subcellular location is the nucleus. Aux/IAA proteins are short-lived transcriptional factors that function as repressors of early auxin response genes at low auxin concentrations. Repression is thought to result from the interaction with auxin response factors (ARFs), proteins that bind to the auxin-responsive promoter element (AuxRE). Formation of heterodimers with ARF proteins may alter their ability to modulate early auxin response genes expression. This chain is Auxin-responsive protein IAA34 (IAA34), found in Arabidopsis thaliana (Mouse-ear cress).